Consider the following 803-residue polypeptide: Integrin beta-1 (803 aa).

Residues 1-24 (MAETNLTLLTWAGILCCLIWSGSA) form the signal peptide. Blocked amino end (Gln) is present on glutamine 25. Residues 25-733 (QQGGSDCIKA…ETPECPSGPD (709 aa)) lie on the Extracellular side of the membrane. The PSI domain maps to 30–80 (DCIKANAKSCGECIQAGPNCGWCKKTDFLQEGEPTSARCDDLAALKSKGCP). 22 disulfide bridges follow: cysteine 31/cysteine 49, cysteine 39/cysteine 469, cysteine 42/cysteine 68, cysteine 52/cysteine 79, cysteine 211/cysteine 217, cysteine 265/cysteine 305, cysteine 405/cysteine 419, cysteine 439/cysteine 467, cysteine 471/cysteine 491, cysteine 482/cysteine 494, cysteine 496/cysteine 505, cysteine 507/cysteine 538, cysteine 521/cysteine 536, cysteine 530/cysteine 541, cysteine 543/cysteine 558, cysteine 560/cysteine 581, cysteine 565/cysteine 579, cysteine 573/cysteine 584, cysteine 586/cysteine 595, cysteine 597/cysteine 620, cysteine 604/cysteine 618, and cysteine 612/cysteine 623. A VWFA domain is found at 144–382 (DYPIDLYYLM…QLIIDAYNSL (239 aa)). The Mg(2+) site is built by serine 156 and serine 158. Ca(2+)-binding residues include serine 158, aspartate 161, aspartate 162, and glutamate 193. Residues 211–217 (CTGDQNC) are CX3CL1-binding. Asparagine 216 carries N-linked (GlcNAc...) asparagine glycosylation. Residues asparagine 248, aspartate 250, proline 252, and glutamate 253 each contribute to the Ca(2+) site. Glutamate 253 contributes to the Mg(2+) binding site. N-linked (GlcNAc...) asparagine glycosylation is present at asparagine 273. A CX3CL1-binding region spans residues 299–318 (LPNDGKCHLENNMYTMSHYY). N-linked (GlcNAc...) asparagine glycans are attached at residues asparagine 367, asparagine 410, asparagine 421, asparagine 433, asparagine 445, and asparagine 486. Residues 387–470 (ILENSKLPKE…IHLQFICDCL (84 aa)) are interaction with TMEM182. I-EGF domains are found at residues 471–506 (CQSE…RLCE), 507–559 (CSTD…KYCE), 560–596 (CDNF…SACD), and 597–636 (CSLD…PTCE). The N-linked (GlcNAc...) asparagine glycan is linked to asparagine 525. Asparagine 589 carries N-linked (GlcNAc...) asparagine glycosylation. Residue asparagine 624 is glycosylated (N-linked (GlcNAc...) asparagine). 6 disulfide bridges follow: cysteine 625-cysteine 635, cysteine 638-cysteine 641, cysteine 645-cysteine 696, cysteine 651-cysteine 670, cysteine 654-cysteine 666, and cysteine 704-cysteine 728. A glycan (N-linked (GlcNAc...) asparagine) is linked at asparagine 674. Residues 734–756 (IIPIVAGVVAGIVLIGLALLLIW) form a helical membrane-spanning segment. At 757–803 (KLLMIIHDRREFAKFEKEKMNAKWDTGENPIYKSAVTTVVNPKYEGK) the chain is on the cytoplasmic side. Tyrosine 788 carries the phosphotyrosine; by Tyr-kinases modification.

This sequence belongs to the integrin beta chain family. As to quaternary structure, heterodimer of an alpha and a beta subunit. Beta-1 associates with either alpha-1, alpha-2, alpha-3, alpha-4, alpha-5, alpha-6, alpha-7, alpha-8, alpha-9, alpha-10, alpha-11 or alpha-V. Interacts with TMEM182 and LAMB1. As to expression, expressed on surface of embryonic fibroblasts (at protein level).

It localises to the cell membrane. It is found in the cell projection. The protein resides in the invadopodium membrane. Its subcellular location is the ruffle membrane. The protein localises to the melanosome. It localises to the lamellipodium. It is found in the ruffle. The protein resides in the cell junction. Its subcellular location is the focal adhesion. In terms of biological role, integrins alpha-1/beta-1, alpha-2/beta-1, alpha-10/beta-1 and alpha-11/beta-1 are receptors for collagen. Integrins alpha-1/beta-1 and alpha-2/beta-1 recognize the proline-hydroxylated sequence G-F-P-G-E-R in collagen. Integrins alpha-2/beta-1, alpha-3/beta-1, alpha-4/beta-1, alpha-5/beta-1, alpha-8/beta-1, alpha-10/beta-1, alpha-11/beta-1 and alpha-V/beta-1 are receptors for fibronectin. Alpha-4/beta-1 recognizes one or more domains within the alternatively spliced CS-1 and CS-5 regions of fibronectin. Integrin alpha-5/beta-1 is a receptor for fibrinogen. Integrin alpha-1/beta-1, alpha-2/beta-1, alpha-6/beta-1 and alpha-7/beta-1 are receptors for lamimin. Integrin alpha-6/beta-1 (ITGA6:ITGB1) is present in oocytes and is involved in sperm-egg fusion. Integrin alpha-4/beta-1 is a receptor for VCAM1 and recognizes the sequence Q-I-D-S in VCAM1. Integrin alpha-9/beta-1 is a receptor for VCAM1, cytotactin and osteopontin. It recognizes the sequence A-E-I-D-G-I-E-L in cytotactin. Integrin alpha-3/beta-1 is a receptor for epiligrin, thrombospondin and CSPG4. Integrin alpha-3/beta-1 provides a docking site for FAP (seprase) at invadopodia plasma membranes in a collagen-dependent manner and hence may participate in the adhesion, formation of invadopodia and matrix degradation processes, promoting cell invasion. Alpha-3/beta-1 may mediate with LGALS3 the stimulation by CSPG4 of endothelial cells migration. Integrin alpha-V/beta-1 is a receptor for vitronectin. Beta-1 integrins recognize the sequence R-G-D in a wide array of ligands. When associated with alpha-7/beta-1 integrin, regulates cell adhesion and laminin matrix deposition. Involved in promoting endothelial cell motility and angiogenesis. Involved in osteoblast compaction through the fibronectin fibrillogenesis cell-mediated matrix assembly process and the formation of mineralized bone nodules. May be involved in up-regulation of the activity of kinases such as PKC via binding to KRT1. Together with KRT1 and RACK1, serves as a platform for SRC activation or inactivation. ITGA4:ITGB1 binds to fractalkine (CX3CL1) and may act as its coreceptor in CX3CR1-dependent fractalkine signaling. ITGA4:ITGB1 and ITGA5:ITGB1 bind to PLA2G2A via a site (site 2) which is distinct from the classical ligand-binding site (site 1) and this induces integrin conformational changes and enhanced ligand binding to site 1. ITGA5:ITGB1 acts as a receptor for fibrillin-1 (FBN1) and mediates R-G-D-dependent cell adhesion to FBN1. ITGA5:ITGB1 acts as a receptor for fibronectin FN1 and mediates R-G-D-dependent cell adhesion to FN1. ITGA5:ITGB1 is a receptor for IL1B and binding is essential for IL1B signaling. ITGA5:ITGB3 is a receptor for soluble CD40LG and is required for CD40/CD40LG signaling. Plays an important role in myoblast differentiation and fusion during skeletal myogenesis. This chain is Integrin beta-1 (ITGB1), found in Gallus gallus (Chicken).